Consider the following 82-residue polypeptide: Sec-independent protein translocase protein TatA (82 aa).

A helical membrane pass occupies residues 1-21 (MGSFSIWHWLIVLLIVVMVFG). The tract at residues 46–82 (GASTDDSATTSAPAGQVTNNSTAADKTTIDVEAKHKS) is disordered. Positions 49 to 70 (TDDSATTSAPAGQVTNNSTAAD) are enriched in polar residues. Basic and acidic residues predominate over residues 72-82 (TTIDVEAKHKS).

Belongs to the TatA/E family. The Tat system comprises two distinct complexes: a TatABC complex, containing multiple copies of TatA, TatB and TatC subunits, and a separate TatA complex, containing only TatA subunits. Substrates initially bind to the TatABC complex, which probably triggers association of the separate TatA complex to form the active translocon.

The protein localises to the cell inner membrane. Part of the twin-arginine translocation (Tat) system that transports large folded proteins containing a characteristic twin-arginine motif in their signal peptide across membranes. TatA could form the protein-conducting channel of the Tat system. The sequence is that of Sec-independent protein translocase protein TatA from Acidovorax sp. (strain JS42).